The following is a 219-amino-acid chain: Ras-like protein 1 (219 aa).

15-22 (GDGGVGKS) contacts GTP. Residues 37–45 (YDPTIEDSY) carry the Effector region motif. Residues 62-66 (DTAGQ) and 121-124 (NKCD) each bind GTP. Residue Cys216 is modified to Cysteine methyl ester. Cys216 carries the S-farnesyl cysteine lipid modification. The propeptide at 217 to 219 (VIC) is removed in mature form.

This sequence belongs to the small GTPase superfamily. Ras family. As to quaternary structure, scd1, scd2, cdc42, and ras1, in its GTP-bound state, act cooperatively to form a protein complex. Palmitoylated by the erf2-erf4 complex.

The protein localises to the cell membrane. It carries out the reaction GTP + H2O = GDP + phosphate + H(+). Alternates between an inactive form bound to GDP and an active form bound to GTP. Activated by a guanine nucleotide-exchange factor (GEF) and inactivated by a GTPase-activating protein (GAP). In terms of biological role, participates in the process of sexual differentiation and the determination of cell shape. Essential for mating and for recognition of the mating pheromone, but not for vegetative growth. Does not regulate the intracellular cAMP level. Regulates two downstream pathways, namely the byr2/byr1/spk1 mitogen-activated protein kinase cascade and the cdc42 small G protein pathway. The former is relevant to mating and sporulation, whereas the latter is relevant to mating, cell growth and cell morphology. The polypeptide is Ras-like protein 1 (ras1) (Schizosaccharomyces pombe (strain 972 / ATCC 24843) (Fission yeast)).